The chain runs to 108 residues: UPF0235 protein APE_0182.1 (108 aa).

This sequence belongs to the UPF0235 family.

In Aeropyrum pernix (strain ATCC 700893 / DSM 11879 / JCM 9820 / NBRC 100138 / K1), this protein is UPF0235 protein APE_0182.1.